Consider the following 140-residue polypeptide: Large ribosomal subunit protein bL34m (140 aa).

The protein belongs to the bacterial ribosomal protein bL34 family. Component of the mitochondrial large ribosomal subunit (mt-LSU). Mature N.crassa 74S mitochondrial ribosomes consist of a small (37S) and a large (54S) subunit. The 37S small subunit contains a 16S ribosomal RNA (16S mt-rRNA) and 32 different proteins. The 54S large subunit contains a 23S rRNA (23S mt-rRNA) and 42 different proteins.

Its subcellular location is the mitochondrion. Functionally, component of the mitochondrial ribosome (mitoribosome), a dedicated translation machinery responsible for the synthesis of mitochondrial genome-encoded proteins, including at least some of the essential transmembrane subunits of the mitochondrial respiratory chain. The mitoribosomes are attached to the mitochondrial inner membrane and translation products are cotranslationally integrated into the membrane. The polypeptide is Large ribosomal subunit protein bL34m (mrpl34) (Neurospora crassa (strain ATCC 24698 / 74-OR23-1A / CBS 708.71 / DSM 1257 / FGSC 987)).